The primary structure comprises 513 residues: ATP synthase subunit alpha (513 aa).

Position 169–176 (169–176 (GDRQTGKS)) interacts with ATP.

The protein belongs to the ATPase alpha/beta chains family. F-type ATPases have 2 components, CF(1) - the catalytic core - and CF(0) - the membrane proton channel. CF(1) has five subunits: alpha(3), beta(3), gamma(1), delta(1), epsilon(1). CF(0) has three main subunits: a(1), b(2) and c(9-12). The alpha and beta chains form an alternating ring which encloses part of the gamma chain. CF(1) is attached to CF(0) by a central stalk formed by the gamma and epsilon chains, while a peripheral stalk is formed by the delta and b chains.

The protein localises to the cell inner membrane. The catalysed reaction is ATP + H2O + 4 H(+)(in) = ADP + phosphate + 5 H(+)(out). Its function is as follows. Produces ATP from ADP in the presence of a proton gradient across the membrane. The alpha chain is a regulatory subunit. The polypeptide is ATP synthase subunit alpha (Sodalis glossinidius (strain morsitans)).